A 138-amino-acid polypeptide reads, in one-letter code: MAEEKHHHHLFHHKKDDEPATGVDSYGEGVYTSETVTTEVVAGGQDEYERYKKEEKQHKHKQHLGEAGALAAGAFALYEKHEAKKDPENAHRHKITEEIAATAAVGAGGYAFHEHHEKKKDHKSAEESTGEKKHHLFG.

The segment covering 1–13 has biased composition (basic residues); the sequence is MAEEKHHHHLFHH. Disordered regions lie at residues 1–27 and 106–138; these read MAEE…DSYG and GAGG…HLFG.

The protein belongs to the abscisic acid and water stress-induced protein family.

It localises to the nucleus. The protein localises to the cytoplasm. In terms of biological role, involved in tolerance to aluminum. Regulates the expression of different genes that collectively contribute to the protection of the cell in response to aluminum stress. The sequence is that of Abscisic stress-ripening protein 5 from Oryza sativa subsp. indica (Rice).